A 174-amino-acid chain; its full sequence is Transcription antitermination protein NusB (174 aa).

The protein belongs to the NusB family.

In terms of biological role, involved in transcription antitermination. Required for transcription of ribosomal RNA (rRNA) genes. Binds specifically to the boxA antiterminator sequence of the ribosomal RNA (rrn) operons. The protein is Transcription antitermination protein NusB of Rhodopseudomonas palustris (strain ATCC BAA-98 / CGA009).